We begin with the raw amino-acid sequence, 2006 residues long: Supporter of activation of yellow protein (2006 aa).

8 disordered regions span residues 1–208 (MNDL…RRVE), 313–347 (MPAK…SSLA), 458–564 (EEKP…AQSQ), 744–794 (DTQD…DPAR), 821–916 (DLEG…KSRR), 929–1029 (VSVG…NNNS), 1044–1082 (CSSS…SDPL), and 1099–1196 (QQLR…SAVA). Residues 10–60 (VAATSSSGSESGTAVESAAATSTAGSAGAAGRPQSNCSANSNAKSVAASST) are compositionally biased toward low complexity. The segment covering 67-81 (VSSTSSPAQRDQQLN) has biased composition (polar residues). The span at 118–128 (SPPPTLPPPTT) shows a compositional bias: pro residues. Low complexity predominate over residues 129 to 168 (PCDDAPSTTGASASASSASGEAPSAASAAGAAGGPMAATA). Over residues 189–199 (ANPNSNANESQ) the composition is skewed to polar residues. The segment covering 321 to 347 (LSSLSPASASSSSASSSSSSSSSSSLA) has biased composition (low complexity). Positions 485 to 494 (GGESNSSSQE) are enriched in polar residues. The segment covering 525 to 534 (SLSKEHDPKI) has biased composition (basic and acidic residues). Positions 543–563 (ASNGIASGGSKASKASKSAQS) are enriched in low complexity. Basic and acidic residues predominate over residues 744–758 (DTQDNNNENHLKRTN). 2 stretches are compositionally biased toward polar residues: residues 759–769 (SEGNESPSSRL) and 828–844 (PPTQ…NGAL). Residues 861 to 870 (PATPQPPPVA) are compositionally biased toward pro residues. Composition is skewed to basic and acidic residues over residues 936 to 945 (ADMKAKEKES) and 963 to 972 (ESPKTRDHRP). Composition is skewed to low complexity over residues 978-990 (RTTT…LQPT) and 1018-1029 (SSESESNNNNNS). The segment covering 1053–1080 (GAAANQQVIGGSGSSSMLPPTTILSSSD) has biased composition (polar residues). Residues 1103–1112 (SSRPSSISCG) show a composition bias toward low complexity. Over residues 1147–1158 (GRGRGRRSRGGR) the composition is skewed to basic residues. Residues 1161–1173 (GSSSVDRAVSVGG) are compositionally biased toward low complexity. Residues 1340 to 1573 (MIQEQVALYL…PPTDLMAQLL (234 aa)) form an SAY region. The tract at residues 1579–1685 (AVGSDEIKTS…AGSEDEDGNE (107 aa)) is disordered. Low complexity-rich tracts occupy residues 1627-1652 (TASS…SSDT) and 1660-1677 (FSST…SGAG). The segment at 1694–1751 (TCGVCLRSQHRNARDMPEAFIRCYTCRKRVHPSCVDMPPRMVGRVRNYNWQCAGCKCC) adopts a PHD-type 1; degenerate zinc-finger fold. The PHD-type 2; degenerate zinc-finger motif lies at 1753–1796 (KCRSSQRPGKMLYCEQCDRGYHIYCLGLRTVPDGRWSCERCCFC). A disordered region spans residues 1887–1911 (TSAQTDDSPMPSPGLTTNGGRALSP).

It belongs to the SAYP family. In terms of tissue distribution, widely expressed. Highly expressed in ovary. Expressed in nursing cells and growing oocytes at all stages of development and accumulates in mature oocytes. Expressed in the nuclei of syncytium blastoderm of early embryos and in the nuclei of different tissues of late embryos, larvae, and adults.

The protein localises to the nucleus. It is found in the cytoplasm. It localises to the chromosome. In terms of biological role, essential transcription regulator during early development. Coactivates transcription of some euchromatin genes and repress transcription in of euchromatin genes translocated to heterochromatin. The chain is Supporter of activation of yellow protein (e(y)3) from Drosophila melanogaster (Fruit fly).